Consider the following 378-residue polypeptide: Chaperone protein DnaJ (378 aa).

The 66-residue stretch at 5-70 (DYYEVLGVAK…QKRAAYDQYG (66 aa)) folds into the J domain. The CR-type zinc finger occupies 138-216 (GYDTQIRVPS…CHGSGKVKET (79 aa)). Positions 151, 154, 168, 171, 190, 193, 204, and 207 each coordinate Zn(2+). CXXCXGXG motif repeat units lie at residues 151–158 (CEVCHGSG), 168–175 (CPTCHGQG), 190–197 (CPKCHGTG), and 204–211 (CAHCHGSG).

The protein belongs to the DnaJ family. As to quaternary structure, homodimer. Zn(2+) serves as cofactor.

The protein localises to the cytoplasm. Functionally, participates actively in the response to hyperosmotic and heat shock by preventing the aggregation of stress-denatured proteins and by disaggregating proteins, also in an autonomous, DnaK-independent fashion. Unfolded proteins bind initially to DnaJ; upon interaction with the DnaJ-bound protein, DnaK hydrolyzes its bound ATP, resulting in the formation of a stable complex. GrpE releases ADP from DnaK; ATP binding to DnaK triggers the release of the substrate protein, thus completing the reaction cycle. Several rounds of ATP-dependent interactions between DnaJ, DnaK and GrpE are required for fully efficient folding. Also involved, together with DnaK and GrpE, in the DNA replication of plasmids through activation of initiation proteins. The chain is Chaperone protein DnaJ from Burkholderia cenocepacia (strain HI2424).